The sequence spans 347 residues: 3-keto-steroid reductase ERG27 (347 aa).

NADP(+)-binding residues include Leu15, Thr38, and Arg44. Active-site proton donor residues include Ser179 and Tyr202. Positions 202, 206, and 237 each coordinate NADP(+). Residue Lys206 is the Lowers pKa of active site Tyr of the active site. Thr345 is modified (phosphothreonine).

Belongs to the short-chain dehydrogenases/reductases (SDR) family. ERG27 subfamily. Heterotetramer of ERG25, ERG26, ERG27 and ERG28. ERG28 acts as a scaffold to tether ERG27 and other 4,4-demethylation-related enzymes, forming a demethylation enzyme complex, in the endoplasmic reticulum. Interacts with ERG25 and ERG28. Also interacts with ERG7, but only in lipid particles.

The protein resides in the endoplasmic reticulum membrane. Its subcellular location is the lipid droplet. It carries out the reaction 3-dehydro-4alpha-methylzymosterol + NADPH + H(+) = 4alpha-methylzymosterol + NADP(+). The protein operates within steroid biosynthesis; zymosterol biosynthesis; zymosterol from lanosterol: step 5/6. 3-keto-steroid reductase; part of the third module of ergosterol biosynthesis pathway that includes the late steps of the pathway. ERG27 is a catalytic component of the C-4 demethylation complex that catalyze the reduction of the keto group on the C-3. The third module or late pathway involves the ergosterol synthesis itself through consecutive reactions that mainly occur in the endoplasmic reticulum (ER) membrane. Firstly, the squalene synthase ERG9 catalyzes the condensation of 2 farnesyl pyrophosphate moieties to form squalene, which is the precursor of all steroids. Squalene synthase is crucial for balancing the incorporation of farnesyl diphosphate (FPP) into sterol and nonsterol isoprene synthesis. Secondly, the squalene epoxidase ERG1 catalyzes the stereospecific oxidation of squalene to (S)-2,3-epoxysqualene, which is considered to be a rate-limiting enzyme in steroid biosynthesis. Then, the lanosterol synthase ERG7 catalyzes the cyclization of (S)-2,3 oxidosqualene to lanosterol, a reaction that forms the sterol core. In the next steps, lanosterol is transformed to zymosterol through a complex process involving various demethylation, reduction and desaturation reactions. The lanosterol 14-alpha-demethylase ERG11 (also known as CYP51) catalyzes C14-demethylation of lanosterol to produce 4,4'-dimethyl cholesta-8,14,24-triene-3-beta-ol, which is critical for ergosterol biosynthesis. The C-14 reductase ERG24 reduces the C14=C15 double bond of 4,4-dimethyl-cholesta-8,14,24-trienol to produce 4,4-dimethyl-cholesta-8,24-dienol. 4,4-dimethyl-cholesta-8,24-dienol is substrate of the C-4 demethylation complex ERG25-ERG26-ERG27 in which ERG25 catalyzes the three-step monooxygenation required for the demethylation of 4,4-dimethyl and 4alpha-methylsterols, ERG26 catalyzes the oxidative decarboxylation that results in a reduction of the 3-beta-hydroxy group at the C-3 carbon to an oxo group, and ERG27 is responsible for the reduction of the keto group on the C-3. ERG28 has a role as a scaffold to help anchor ERG25, ERG26 and ERG27 to the endoplasmic reticulum and ERG29 regulates the activity of the iron-containing C4-methylsterol oxidase ERG25. Then, the sterol 24-C-methyltransferase ERG6 catalyzes the methyl transfer from S-adenosyl-methionine to the C-24 of zymosterol to form fecosterol. The C-8 sterol isomerase ERG2 catalyzes the reaction which results in unsaturation at C-7 in the B ring of sterols and thus converts fecosterol to episterol. The sterol-C5-desaturase ERG3 then catalyzes the introduction of a C-5 double bond in the B ring to produce 5-dehydroepisterol. The C-22 sterol desaturase ERG5 further converts 5-dehydroepisterol into ergosta-5,7,22,24(28)-tetraen-3beta-ol by forming the C-22(23) double bond in the sterol side chain. Finally, ergosta-5,7,22,24(28)-tetraen-3beta-ol is substrate of the C-24(28) sterol reductase ERG4 to produce ergosterol. In terms of biological role, facilitates the association of ERG7 with lipid particles preventing its digestion in the endoplasmic reticulum and the lipid particles. This is 3-keto-steroid reductase ERG27 from Saccharomyces cerevisiae (strain ATCC 204508 / S288c) (Baker's yeast).